Reading from the N-terminus, the 510-residue chain is ATP synthase subunit alpha (510 aa).

An ATP-binding site is contributed by 169–176 (GDRQTGKT).

This sequence belongs to the ATPase alpha/beta chains family. As to quaternary structure, F-type ATPases have 2 components, CF(1) - the catalytic core - and CF(0) - the membrane proton channel. CF(1) has five subunits: alpha(3), beta(3), gamma(1), delta(1), epsilon(1). CF(0) has three main subunits: a(1), b(2) and c(9-12). The alpha and beta chains form an alternating ring which encloses part of the gamma chain. CF(1) is attached to CF(0) by a central stalk formed by the gamma and epsilon chains, while a peripheral stalk is formed by the delta and b chains.

The protein resides in the cell inner membrane. The enzyme catalyses ATP + H2O + 4 H(+)(in) = ADP + phosphate + 5 H(+)(out). Its function is as follows. Produces ATP from ADP in the presence of a proton gradient across the membrane. The alpha chain is a regulatory subunit. The polypeptide is ATP synthase subunit alpha (Rickettsia conorii (strain ATCC VR-613 / Malish 7)).